Here is a 644-residue protein sequence, read N- to C-terminus: Chaperone protein DnaK (644 aa).

Phosphothreonine; by autocatalysis is present on threonine 199. The segment at 589-644 (QALAEASHKLAEKMYSQGQGPQAGPGEEPSGQSGGTEKPVEGEVVDAEFEEVKNKK) is disordered. The span at 604-619 (SQGQGPQAGPGEEPSG) shows a compositional bias: low complexity.

It belongs to the heat shock protein 70 family.

Its function is as follows. Acts as a chaperone. This is Chaperone protein DnaK from Nitrosospira multiformis (strain ATCC 25196 / NCIMB 11849 / C 71).